Reading from the N-terminus, the 307-residue chain is Protein ORANGE, chloroplastic (307 aa).

A chloroplast-targeting transit peptide spans 1-55 (MSSLGRILSVSYPPDPYTWRFSQYKLSSSLGRNRRLRWRFTALDPESSSLDSESS). Lysine 58 is covalently cross-linked (Glycyl lysine isopeptide (Lys-Gly) (interchain with G-Cter in ubiquitin)). Helical transmembrane passes span 146 to 166 (VYYA…GLLA) and 199 to 219 (IVAS…VVEV). Residues 208-299 (VGVISALMVV…CTGMAMASEH (92 aa)) are CR-type-like. Residues 230 to 237 (CKYCLGTG) form a CXXCXGXG motif repeat. Residues 241-248 (CARCSSTG) form a CXXCXXXG motif repeat. Residues 274–281 (CSNCSGAG) form a CXXCXGXG motif repeat. One copy of the CXXCXXXG motif repeat lies at 285-292 (CPTCLCTG).

The protein belongs to the orange-like family. In terms of assembly, interacts with the phytoene synthase PSY1 in chloroplast. Binds to the eukaryotic release factor eRF1-2. Interacts with the transcription factor TCP14 in the nucleus to repress chloroplast biogenesis in etiolated seedlings. Associates to the E2 ubiquitin-conjugating enzyme UBC19. In terms of processing, ubiquitination at K-58 by UBC19 is essential for nuclear localization.

It is found in the plastid. The protein resides in the chloroplast membrane. It localises to the nucleus. The protein localises to the cytoplasm. Involved in chromoplast differentiation. Associated with a cellular process that triggers the differentiation of pro-plastids or other non-colored plastids into chromoplasts for carotenoid accumulation. Is associated with carotenoid accumulation in chromoplasts. Functions as a major regulator of the phytoene synthase PSY1 protein level and activity. Modulates carotenoid biosynthesis by means of post-transcriptional regulation of PSY1. Modulates carotenoid biosynthesis in part by up-regulating a series of endogenous carotenogenic genes. Regulates cell elongation in the petiole in an eRF1-2-dependent manner. Binds to and represses TCP14 transactivation activity, thus preventing early light-induced proteins (ELIPs, e.g. ELIP1 and ELIP2) expression and delaying chloroplast biogenesis (e.g. lower chlorophyll biosynthesis and slower development of thylakoid membranes) in germinating cotyledons and etiolated seedlings; reduced levels upon illumination combined to TCP14 accumulation derepress chloroplast biogenesis during deetiolation. This is Protein ORANGE, chloroplastic from Arabidopsis thaliana (Mouse-ear cress).